The chain runs to 499 residues: Probable cytosol aminopeptidase (499 aa).

Positions 269 and 274 each coordinate Mn(2+). K281 is a catalytic residue. Mn(2+) is bound by residues D292, D351, and E353. R355 is an active-site residue.

Belongs to the peptidase M17 family. Mn(2+) serves as cofactor.

Its subcellular location is the cytoplasm. The enzyme catalyses Release of an N-terminal amino acid, Xaa-|-Yaa-, in which Xaa is preferably Leu, but may be other amino acids including Pro although not Arg or Lys, and Yaa may be Pro. Amino acid amides and methyl esters are also readily hydrolyzed, but rates on arylamides are exceedingly low.. The catalysed reaction is Release of an N-terminal amino acid, preferentially leucine, but not glutamic or aspartic acids.. Presumably involved in the processing and regular turnover of intracellular proteins. Catalyzes the removal of unsubstituted N-terminal amino acids from various peptides. The sequence is that of Probable cytosol aminopeptidase from Actinobacillus pleuropneumoniae serotype 5b (strain L20).